Here is a 653-residue protein sequence, read N- to C-terminus: Endoglin (653 aa).

An N-terminal signal peptide occupies residues 1 to 26 (MDRGVLPLPITLLFVIYSFVPTTGLA). An OR1, N-terminal part region spans residues 27-47 (ERVGCDLQPVDPTRGEVTFTT). Residues 27–337 (ERVGCDLQPV…SSCGGVFQTT (311 aa)) form a required for interaction with GDF2 region. At 27–581 (ERVGCDLQPV…IVSPDLSGKG (555 aa)) the chain is on the extracellular side. 7 disulfide bridges follow: C31/C209, C54/C184, C244/C330, C350/C382, C363/C442, C394/C412, and C493/C549. The segment at 48-201 (SQVSEGCVAQ…MGATLEWQPR (154 aa)) is OR2. 3 N-linked (GlcNAc...) asparagine glycosylation sites follow: N89, N135, and N266. The tract at residues 202–330 (AQTPVQSCRL…SNVSLRASSC (129 aa)) is OR1, C-terminal part. Positions 270 to 282 (QILTTGEYSVKIF) are essential for interaction with GDF2. N-linked (GlcNAc...) asparagine glycans are attached at residues N307 and N322. The region spanning 363–510 (CGNQVMTLAL…GDMVELIQSR (148 aa)) is the ZP domain. Residues 582-606 (LVLPSVLGITFGAFLIGALLTAALW) form a helical membrane-spanning segment. Over 607–653 (YIYSHTRGPSKREPVVAVAAPASSESSSTNHSIGSTQSTPCSTSSMA) the chain is Cytoplasmic. A compositionally biased stretch (low complexity) spans 624–634 (VAAPASSESSS). Positions 624 to 653 (VAAPASSESSSTNHSIGSTQSTPCSTSSMA) are disordered. Positions 635-653 (TNHSIGSTQSTPCSTSSMA) are enriched in polar residues. S641 and S644 each carry phosphoserine; by TGFBR1.

Homodimer; disulfide-linked. Forms a heteromeric complex with the signaling receptors for transforming growth factor-beta: TGFBR1 and/or TGFBR2. Interacts with TGFB1. It is able to bind TGFB1 and TGFB2 with high affinity, but not TGFB3. Interacts with GDF2, forming a heterotetramer with a 2:2 stoichiometry. Interacts with ACVRL1. Can form a heteromeric complex with GDF2 and ACVRL1. Interacts with BMP10. Interacts with DYNLT4. Interacts with ARRB2. In terms of tissue distribution, detected on blood vessels (at protein level). Detected on adult pulmonary artery, capillaries supporting the heart muscle and lung alveolar capillary endothelial cells. Endoglin is restricted to endothelial cells in all tissues except bone marrow and is also found in stromal cells within the connective tissue of intestine, stomach, heart, skeletal muscle, uterus, ovary, oviduct, testis and thymus.

It localises to the cell membrane. Its function is as follows. Vascular endothelium glycoprotein that plays an important role in the regulation of angiogenesis. Required for normal structure and integrity of adult vasculature. Regulates the migration of vascular endothelial cells. Required for normal extraembryonic angiogenesis and for embryonic heart development. May regulate endothelial cell shape changes in response to blood flow, which drive vascular remodeling and establishment of normal vascular morphology during angiogenesis. May play a role in the binding of endothelial cells to integrins. Acts as a TGF-beta coreceptor and is involved in the TGF-beta/BMP signaling cascade that ultimately leads to the activation of SMAD transcription factors. Required for GDF2/BMP9 signaling through SMAD1 in endothelial cells and modulates TGFB1 signaling through SMAD3. This chain is Endoglin (Eng), found in Mus musculus (Mouse).